Here is a 390-residue protein sequence, read N- to C-terminus: MQVTTITMDDVQYPYRLGTDCLDGIVTRLGELGASRYLIVSDPRVAELYGQGLRERLAEQAGPAELITHASGEQNKGLPALHDLAEEALRRGADRQSIVVALGGGVTGNIAGLLAALLFRGIRLVHVPTTVVAMLDSVLSLKQAVNAGVGKNLVGTFYQPVEVLADTAMLRTLPVREVRSGMCEVVKNSLAIRPSMIDQLSAGLRPDGRYPDDTMHWIIYESLAAKAQVTAYDKYERGEGLILEYGHTVGHAVEHSSQGAVPHGAAVALGMIAAAQVSHRAGWASAELVDLHRELVAKTGVARRIPSDIPLSAVRHRLSFDNKRGYLPASADTYPMVLLESPGKVLRSEGTVLTAAPRDLVDAVVDELAEPPRPAAARTDDAATVLGGAG.

Residues Asp-42, Glu-73–Lys-76, Gly-105–Asn-109, Thr-129–Thr-130, Ser-140–Lys-142, and Lys-151–Asn-152 contribute to the NAD(+) site. The active site involves Lys-142. A Co(2+)-binding site is contributed by Glu-184. Glu-244 is an active-site residue. Residues His-247 and His-263 each contribute to the Co(2+) site. A disordered region spans residues Pro-371 to Gly-390.

The protein belongs to the sugar phosphate cyclases superfamily. DOI synthase family. NAD(+) is required as a cofactor. The cofactor is Co(2+).

It carries out the reaction D-glucose 6-phosphate = 2-deoxy-L-scyllo-inosose + phosphate. The protein operates within metabolic intermediate biosynthesis; 2-deoxystreptamine biosynthesis; 2-deoxystreptamine from D-glucose 6-phosphate: step 1/4. It functions in the pathway antibiotic biosynthesis; kanamycin biosynthesis. Catalyzes the intramolecular carbocycle formation from D-glucose-6-phosphate to 2-deoxy-scyllo-inosose (DOI). The sequence is that of 2-deoxy-scyllo-inosose synthase (kanC) from Streptomyces kanamyceticus.